The chain runs to 410 residues: Ribonucleoside-diphosphate reductase small chain (410 aa).

Polar residues predominate over residues 1-20 (MSVQTSPSKQVTSGIQNLNM). Disordered stretches follow at residues 1–43 (MSVQ…DEDL) and 55–78 (NANK…ANEP). 2 stretches are compositionally biased toward basic and acidic residues: residues 23-43 (PAKK…DEDL) and 55-65 (NANKKAAEAKK). Fe cation contacts are provided by D146, E177, and H180. Y184 is an active-site residue. The Fe cation site is built by E240, E274, and H277.

The protein belongs to the ribonucleoside diphosphate reductase small chain family. As to quaternary structure, heterodimer of a large and a small subunit. Fe cation serves as cofactor.

The enzyme catalyses a 2'-deoxyribonucleoside 5'-diphosphate + [thioredoxin]-disulfide + H2O = a ribonucleoside 5'-diphosphate + [thioredoxin]-dithiol. Provides the precursors necessary for DNA synthesis. Catalyzes the biosynthesis of deoxyribonucleotides from the corresponding ribonucleotides. The polypeptide is Ribonucleoside-diphosphate reductase small chain (rnr-2) (Neurospora crassa (strain ATCC 24698 / 74-OR23-1A / CBS 708.71 / DSM 1257 / FGSC 987)).